The chain runs to 289 residues: NAD kinase (289 aa).

The active-site Proton acceptor is the aspartate 63. NAD(+) contacts are provided by residues 63-64 (DG), arginine 68, 138-139 (ND), arginine 149, aspartate 168, 179-184 (TGYSLS), and glutamine 238.

The protein belongs to the NAD kinase family. The cofactor is a divalent metal cation.

Its subcellular location is the cytoplasm. The enzyme catalyses NAD(+) + ATP = ADP + NADP(+) + H(+). Its function is as follows. Involved in the regulation of the intracellular balance of NAD and NADP, and is a key enzyme in the biosynthesis of NADP. Catalyzes specifically the phosphorylation on 2'-hydroxyl of the adenosine moiety of NAD to yield NADP. This chain is NAD kinase, found in Gemmatimonas aurantiaca (strain DSM 14586 / JCM 11422 / NBRC 100505 / T-27).